The following is a 283-amino-acid chain: MNWTGLYTLLSGVNRHSTAIGRVWLSVIFIFRIMVLVVAAESVWGDEKSSFICNTLQPGCNSVCYDQFFPISHVRLWSLQLILVSTPALLVAMHVAHQQHIEKKMLRLEGHGDPLHLEEVKRHKVHISGTLWWAYVISVVFRLLFEAVFMYVFYLLYPGYAMVRLVKCDVYPCPNTVDCFVSRPTEKTVFTVFMLAASGICIILNVAEVVYLIIRACARRAQRRSNPPSRKGSGFGHRLSPEYKQNEINKLLSEQDGSLKDILRRSPGTGAGLAEKSDRCSAC.

Topologically, residues M1–R22 are cytoplasmic. A helical transmembrane segment spans residues V23–G45. Residues D46–R75 lie on the Extracellular side of the membrane. A helical membrane pass occupies residues L76–V95. Topologically, residues A96 to T130 are cytoplasmic. Residues L131–F153 form a helical membrane-spanning segment. Residues Y154–T191 are Extracellular-facing. Residues V192 to I214 form a helical membrane-spanning segment. At R215 to C283 the chain is on the cytoplasmic side. Phosphoserine is present on residues S233, S258, S266, and S277.

This sequence belongs to the connexin family. Beta-type (group I) subfamily. As to quaternary structure, a connexon is composed of a hexamer of connexins. Interacts with CNST.

The protein localises to the cell membrane. It localises to the cell junction. It is found in the gap junction. One gap junction consists of a cluster of closely packed pairs of transmembrane channels, the connexons, through which materials of low MW diffuse from one cell to a neighboring cell. This is Gap junction beta-1 protein (GJB1) from Macaca fascicularis (Crab-eating macaque).